The sequence spans 233 residues: DNA-directed RNA polymerase V subunit 5C (233 aa).

It belongs to the archaeal Rpo5/eukaryotic RPB5 RNA polymerase subunit family. Component of the RNA polymerase V complex. As to expression, expressed in flower buds and siliques.

It localises to the nucleus. In terms of biological role, DNA-dependent RNA polymerase catalyzes the transcription of DNA into RNA using the four ribonucleoside triphosphates as substrates. Component of RNA polymerase V involved in RNA-directed DNA methylation-dependent (RdDM) silencing of endogenous repeated sequences, including transposable elements. The polypeptide is DNA-directed RNA polymerase V subunit 5C (NRPE5C) (Arabidopsis thaliana (Mouse-ear cress)).